The following is a 737-amino-acid chain: Catalase-peroxidase (737 aa).

The N-terminal stretch at 1–23 is a signal peptide; sequence MLKKILPVLITLAIVHNTPTAWA. Positions 102–223 form a cross-link, tryptophyl-tyrosyl-methioninium (Trp-Tyr) (with M-249); the sequence is WHGAGTYRIY…LAATQMGLIY (122 aa). H103 functions as the Proton acceptor in the catalytic mechanism. The tryptophyl-tyrosyl-methioninium (Tyr-Met) (with W-102) cross-link spans 223-249; the sequence is YVNPEGPNGKPDPVAAAKDIREAFARM. H264 is a binding site for heme b.

Belongs to the peroxidase family. Peroxidase/catalase subfamily. In terms of assembly, homodimer or homotetramer. Heme b serves as cofactor. Formation of the three residue Trp-Tyr-Met cross-link is important for the catalase, but not the peroxidase activity of the enzyme.

It carries out the reaction H2O2 + AH2 = A + 2 H2O. The catalysed reaction is 2 H2O2 = O2 + 2 H2O. Its function is as follows. Bifunctional enzyme with both catalase and broad-spectrum peroxidase activity. In Yersinia pseudotuberculosis serotype O:3 (strain YPIII), this protein is Catalase-peroxidase.